The chain runs to 560 residues: DNA ligase B (560 aa).

The active-site N6-AMP-lysine intermediate is the Lys-124.

This sequence belongs to the NAD-dependent DNA ligase family. LigB subfamily.

The enzyme catalyses NAD(+) + (deoxyribonucleotide)n-3'-hydroxyl + 5'-phospho-(deoxyribonucleotide)m = (deoxyribonucleotide)n+m + AMP + beta-nicotinamide D-nucleotide.. Catalyzes the formation of phosphodiester linkages between 5'-phosphoryl and 3'-hydroxyl groups in double-stranded DNA using NAD as a coenzyme and as the energy source for the reaction. This chain is DNA ligase B, found in Escherichia coli O6:K15:H31 (strain 536 / UPEC).